We begin with the raw amino-acid sequence, 171 residues long: Peptide deformylase (171 aa).

Residues C92 and H134 each contribute to the Fe cation site. E135 is a catalytic residue. A Fe cation-binding site is contributed by H138.

The protein belongs to the polypeptide deformylase family. Fe(2+) serves as cofactor.

The catalysed reaction is N-terminal N-formyl-L-methionyl-[peptide] + H2O = N-terminal L-methionyl-[peptide] + formate. In terms of biological role, removes the formyl group from the N-terminal Met of newly synthesized proteins. Requires at least a dipeptide for an efficient rate of reaction. N-terminal L-methionine is a prerequisite for activity but the enzyme has broad specificity at other positions. This chain is Peptide deformylase, found in Polynucleobacter necessarius subsp. necessarius (strain STIR1).